The following is a 467-amino-acid chain: A-type ATP synthase subunit B (467 aa).

The segment at 95-114 (GKGQPRDHMPLPPPEDFRDV) is disordered.

The protein belongs to the ATPase alpha/beta chains family. Has multiple subunits with at least A(3), B(3), C, D, E, F, H, I and proteolipid K(x).

Its subcellular location is the cell membrane. Functionally, component of the A-type ATP synthase that produces ATP from ADP in the presence of a proton gradient across the membrane. The B chain is a regulatory subunit. This Pyrobaculum islandicum (strain DSM 4184 / JCM 9189 / GEO3) protein is A-type ATP synthase subunit B.